Consider the following 823-residue polypeptide: Ubiquitin carboxyl-terminal hydrolase 16 (823 aa).

Residues 22–142 form a UBP-type zinc finger; it reads PVCRHIRKGL…QVVDYVRKQA (121 aa). 12 residues coordinate Zn(2+): cysteine 24, histidine 26, cysteine 48, cysteine 51, cysteine 74, cysteine 77, cysteine 82, histidine 90, histidine 94, histidine 103, cysteine 116, and cysteine 119. A Glycyl lysine isopeptide (Lys-Gly) (interchain with G-Cter in SUMO2) cross-link involves residue lysine 140. The disordered stretch occupies residues 146 to 189; that stretch reads TPKPAEKDNGNIELENKKLEKESKNEQEREKKENMAKENPPMNS. The span at 149 to 181 shows a compositional bias: basic and acidic residues; the sequence is PAEKDNGNIELENKKLEKESKNEQEREKKENMA. Phosphoserine is present on serine 189. In terms of domain architecture, USP spans 196–822; that stretch reads KGLSNLGNTC…QAYLLFYERI (627 aa). The active-site Nucleophile is the cysteine 205. Residues 394–408 are compositionally biased toward basic and acidic residues; the sequence is SGKKSVNDKNLKKTV. Residues 394–460 are disordered; sequence SGKKSVNDKN…AKNQRRQQKI (67 aa). A compositionally biased stretch (acidic residues) spans 409-420; sequence EDEDQDSEEEKD. Position 415 is a phosphoserine (serine 415). Residues 421–430 show a composition bias toward basic and acidic residues; that stretch reads NDSYIKERSD. Positions 438–458 are enriched in basic residues; the sequence is HLQKKAKKQAKKQAKNQRRQQ. Residues serine 531 and serine 552 each carry the phosphoserine modification. Phosphothreonine is present on threonine 554. Histidine 758 serves as the catalytic Proton acceptor.

Belongs to the peptidase C19 family. USP16 subfamily. In terms of assembly, homotetramer. Associates with late pre-40S ribosomes. Interacts with CEP78; promoting deubiquitination of tektins. Phosphorylated at the onset of mitosis and dephosphorylated during the metaphase/anaphase transition. Phosphorylation by AURKB enhances the deubiquitinase activity. As to expression, present in all the tissues examined including fetal brain, lung, liver, kidney, and adult heart, brain, placenta, lung, liver, skeletal muscle, kidney and pancreas.

It localises to the nucleus. Its subcellular location is the cytoplasm. The enzyme catalyses Thiol-dependent hydrolysis of ester, thioester, amide, peptide and isopeptide bonds formed by the C-terminal Gly of ubiquitin (a 76-residue protein attached to proteins as an intracellular targeting signal).. In terms of biological role, specifically deubiquitinates 'Lys-120' of histone H2A (H2AK119Ub), a specific tag for epigenetic transcriptional repression, thereby acting as a coactivator. Deubiquitination of histone H2A is a prerequisite for subsequent phosphorylation at 'Ser-11' of histone H3 (H3S10ph), and is required for chromosome segregation when cells enter into mitosis. In resting B- and T-lymphocytes, phosphorylation by AURKB leads to enhance its activity, thereby maintaining transcription in resting lymphocytes. Regulates Hox gene expression via histone H2A deubiquitination. Prefers nucleosomal substrates. Does not deubiquitinate histone H2B. Also deubiquitinates non-histone proteins, such as ribosomal protein RPS27A: deubiquitination of monoubiquitinated RPS27A promotes maturation of the 40S ribosomal subunit. Also mediates deubiquitination of tektin proteins (TEKT1, TEKT2, TEK3, TEKT4 and TEKT5), promoting their stability. The sequence is that of Ubiquitin carboxyl-terminal hydrolase 16 from Homo sapiens (Human).